The chain runs to 116 residues: U30-theraphotoxin-Cg1b (116 aa).

The first 17 residues, 1–17 (MKLCVLTIATLLVTATS), serve as a signal peptide directing secretion. Residues 18–53 (LETQKEIAEGNELTREETPSLVEHKEDEAAAASEKR) constitute a propeptide that is removed on maturation. The tract at residues 25-45 (AEGNELTREETPSLVEHKEDE) is disordered. Intrachain disulfides connect cysteine 55–cysteine 69, cysteine 62–cysteine 75, cysteine 66–cysteine 112, and cysteine 68–cysteine 88.

Belongs to the neurotoxin 03 (Tx2) family. 02 subfamily. In terms of tissue distribution, expressed by the venom gland.

It is found in the secreted. Functionally, probable ion channel inhibitor. The chain is U30-theraphotoxin-Cg1b from Chilobrachys guangxiensis (Chinese earth tiger tarantula).